Here is a 401-residue protein sequence, read N- to C-terminus: Beta-ketoadipyl-CoA thiolase (401 aa).

The Acyl-thioester intermediate role is filled by Cys90. Catalysis depends on proton acceptor residues His357 and Cys387.

The protein belongs to the thiolase-like superfamily. Thiolase family.

It carries out the reaction succinyl-CoA + acetyl-CoA = 3-oxoadipyl-CoA + CoA. It participates in aromatic compound metabolism; beta-ketoadipate pathway; acetyl-CoA and succinyl-CoA from 3-oxoadipate: step 2/2. In terms of biological role, catalyzes thiolytic cleavage of beta-ketoadipyl-CoA to succinyl-CoA and acetyl-CoA. The protein is Beta-ketoadipyl-CoA thiolase (catF) of Acinetobacter baylyi (strain ATCC 33305 / BD413 / ADP1).